The following is a 107-amino-acid chain: uncharacterized protein (107 aa).

This is an uncharacterized protein from Acidianus sp. F28 (AFV-2).